Reading from the N-terminus, the 394-residue chain is Phosphopentomutase (394 aa).

Residues aspartate 15, aspartate 288, histidine 293, aspartate 329, histidine 330, and histidine 341 each contribute to the Mn(2+) site.

It belongs to the phosphopentomutase family. The cofactor is Mn(2+).

It localises to the cytoplasm. The enzyme catalyses 2-deoxy-alpha-D-ribose 1-phosphate = 2-deoxy-D-ribose 5-phosphate. It carries out the reaction alpha-D-ribose 1-phosphate = D-ribose 5-phosphate. The protein operates within carbohydrate degradation; 2-deoxy-D-ribose 1-phosphate degradation; D-glyceraldehyde 3-phosphate and acetaldehyde from 2-deoxy-alpha-D-ribose 1-phosphate: step 1/2. Functionally, isomerase that catalyzes the conversion of deoxy-ribose 1-phosphate (dRib-1-P) and ribose 1-phosphate (Rib-1-P) to deoxy-ribose 5-phosphate (dRib-5-P) and ribose 5-phosphate (Rib-5-P), respectively. This Bacillus licheniformis (strain ATCC 14580 / DSM 13 / JCM 2505 / CCUG 7422 / NBRC 12200 / NCIMB 9375 / NCTC 10341 / NRRL NRS-1264 / Gibson 46) protein is Phosphopentomutase.